A 166-amino-acid polypeptide reads, in one-letter code: MTEKIGLFTGTFDPLTNGHLDIIKRASQHFDQLYVGIFKNDQKNPLFPTDKRVEMLEEALTNLSVNHKVKVIKHERDLTVNIAKKLGVTAMVRSLRNSQDLEYEKNMFYFNLEMTGIETLFFLAKPELEPLNSTRIRELHAFGQDVSAWVPENVSRELRKLDEQKK.

T11 provides a ligand contact to substrate. ATP is bound by residues 11-12 and H19; that span reads TF. Residues K43, T79, and R93 each coordinate substrate. Residues E104 and 128–134 contribute to the ATP site; that span reads LEPLNST.

This sequence belongs to the bacterial CoaD family. Homohexamer. Mg(2+) is required as a cofactor.

Its subcellular location is the cytoplasm. It carries out the reaction (R)-4'-phosphopantetheine + ATP + H(+) = 3'-dephospho-CoA + diphosphate. The protein operates within cofactor biosynthesis; coenzyme A biosynthesis; CoA from (R)-pantothenate: step 4/5. Its function is as follows. Reversibly transfers an adenylyl group from ATP to 4'-phosphopantetheine, yielding dephospho-CoA (dPCoA) and pyrophosphate. The chain is Phosphopantetheine adenylyltransferase from Lactococcus lactis subsp. cremoris (strain MG1363).